The sequence spans 205 residues: MSRGLQLLLLSCAYSLAPATPEVKVACSEDVDLPCTAPWDPQVPYTVSWVKLLEGGEERMETPQEDHLRGQHYHQKGQNGSFDAPNERPYSLKIRNTTSCNSGTYRCTLQDPDGQRNLSGKVILRVTGCPAQRKEETFKKYRAEIVLLLALVIFYLTLIIFTCKFARLQSIFPDFSKAGMERAFLPVTSPNKHLGLVTPHKTELV.

The signal sequence occupies residues 1–19; sequence MSRGLQLLLLSCAYSLAPA. Residues 20–114 form the Ig-like V-type domain; it reads TPEVKVACSE…YRCTLQDPDG (95 aa). Residues 20–144 are Extracellular-facing; sequence TPEVKVACSE…EETFKKYRAE (125 aa). Cys-35 and Cys-107 form a disulfide bridge. The segment covering 60 to 69 has biased composition (basic and acidic residues); it reads METPQEDHLR. Residues 60–81 are disordered; that stretch reads METPQEDHLRGQHYHQKGQNGS. Residues Asn-79, Asn-96, and Asn-117 are each glycosylated (N-linked (GlcNAc...) asparagine). The chain crosses the membrane as a helical span at residues 145–166; it reads IVLLLALVIFYLTLIIFTCKFA. The Cytoplasmic portion of the chain corresponds to 167–205; the sequence is RLQSIFPDFSKAGMERAFLPVTSPNKHLGLVTPHKTELV.

In terms of assembly, monomer. Homodimer. Homotrimer. Interacts with MARCHF1; this interaction antagonizes MARCHF1-mediated MHC II and CD86 down-regulation. In terms of processing, glycosylated when expressed on activated dendritic cells. In terms of tissue distribution, expressed by activated lymphocytes, Langerhans cells and activatd dendritic cells.

It is found in the membrane. Its function is as follows. Transmembrane glycoprotein predominantly found on the surface of many immune cells including dendritic cells or lymphocytes that plays various roles in immune response regulation. Plays an essential role in CD4(+) T-selection, differentiation and stability by regulating the activity of the major E3 ubiquitin ligase responsible for controlling MHCII trafficking MARCHF8. Also inhibits MARCHF1 association with MHCII or CD86 to prevent their ubiquitination and subsequent degradation. In addition, acts as an important modulator of protective responses against acute infections. The protein is CD83 antigen (CD83) of Homo sapiens (Human).